The primary structure comprises 395 residues: Enolase (395 aa).

Substrate is bound by residues histidine 136 and glutamate 145. Glutamate 188 serves as the catalytic Proton donor. Mg(2+) is bound by residues aspartate 223, glutamate 271, and aspartate 296. Residues glutamate 271 and aspartate 296 each coordinate substrate. Lysine 321 (proton acceptor) is an active-site residue. Residues 348–351 (SHRS) and lysine 372 each bind substrate.

It belongs to the enolase family. Homodimer. Mg(2+) serves as cofactor.

It localises to the cytoplasm. The catalysed reaction is (2R)-2-phosphoglycerate = phosphoenolpyruvate + H2O. Its pathway is carbohydrate degradation; glycolysis; pyruvate from D-glyceraldehyde 3-phosphate: step 4/5. In Alligator mississippiensis (American alligator), this protein is Enolase.